Reading from the N-terminus, the 430-residue chain is tRNA(Ile)-lysidine synthase (430 aa).

ATP is bound at residue 21–26; the sequence is SGGLDS.

The protein belongs to the tRNA(Ile)-lysidine synthase family.

The protein resides in the cytoplasm. It carries out the reaction cytidine(34) in tRNA(Ile2) + L-lysine + ATP = lysidine(34) in tRNA(Ile2) + AMP + diphosphate + H(+). Ligates lysine onto the cytidine present at position 34 of the AUA codon-specific tRNA(Ile) that contains the anticodon CAU, in an ATP-dependent manner. Cytidine is converted to lysidine, thus changing the amino acid specificity of the tRNA from methionine to isoleucine. This is tRNA(Ile)-lysidine synthase from Salmonella newport (strain SL254).